Here is a 205-residue protein sequence, read N- to C-terminus: Dr1-associated corepressor (205 aa).

A Histone-fold domain is found at 14-77 (PARIKKIMQT…SHLKQCIELE (64 aa)). The disordered stretch occupies residues 91 to 205 (PDMQGDGEDN…DAEDEEDYDS (115 aa)). Positions 98-108 (EDNHVDGDKGP) are enriched in basic and acidic residues. Positions 138 to 155 (SEQEDESEDTDTDGEEET) are enriched in acidic residues. The segment covering 172–192 (PPTPFIPFTSPLPLPPAPPGP) has biased composition (pro residues). Residues 196 to 205 (DAEDEEDYDS) show a composition bias toward acidic residues.

The protein belongs to the NC2 alpha/DRAP1 family. As to quaternary structure, heterodimer with DR1. Binds BTAF1. Post-translationally, phosphorylation reduces DNA binding, but has no effect on heterodimerization and TBP binding.

It is found in the nucleus. In terms of biological role, the association of the DR1/DRAP1 heterodimer with TBP results in a functional repression of both activated and basal transcription of class II genes. This interaction precludes the formation of a transcription-competent complex by inhibiting the association of TFIIA and/or TFIIB with TBP. Can bind to DNA on its own. The protein is Dr1-associated corepressor (Drap1) of Mus musculus (Mouse).